The chain runs to 229 residues: UPF0758 protein GSU0386 (229 aa).

Positions 107 to 229 (RFTSPEQVYN…FTSFVSAGLL (123 aa)) constitute an MPN domain. Zn(2+)-binding residues include His178, His180, and Asp191. The JAMM motif signature appears at 178–191 (HNHPTGDPAPSRED).

This sequence belongs to the UPF0758 family.

The polypeptide is UPF0758 protein GSU0386 (Geobacter sulfurreducens (strain ATCC 51573 / DSM 12127 / PCA)).